The chain runs to 65 residues: Large ribosomal subunit protein bL35 (65 aa).

The tract at residues 1–47 is disordered; the sequence is MPKIKTNRGAAKRFRKTASGKIKRNSAFTSHILTSKTRKRKRQLRSS. The span at 10-24 shows a compositional bias: basic residues; that stretch reads AAKRFRKTASGKIKR. Positions 26-35 are enriched in polar residues; that stretch reads SAFTSHILTS.

This sequence belongs to the bacterial ribosomal protein bL35 family.

In Geobacter metallireducens (strain ATCC 53774 / DSM 7210 / GS-15), this protein is Large ribosomal subunit protein bL35.